Consider the following 146-residue polypeptide: Large ribosomal subunit protein uL13 (146 aa).

It belongs to the universal ribosomal protein uL13 family. As to quaternary structure, part of the 50S ribosomal subunit.

In terms of biological role, this protein is one of the early assembly proteins of the 50S ribosomal subunit, although it is not seen to bind rRNA by itself. It is important during the early stages of 50S assembly. The polypeptide is Large ribosomal subunit protein uL13 (Mycoplasma pneumoniae (strain ATCC 29342 / M129 / Subtype 1) (Mycoplasmoides pneumoniae)).